Here is a 762-residue protein sequence, read N- to C-terminus: MLKLTALVALLLGAASATPTPSPPASDEGITKRATSFYYPNMDHVNAPRGFAPDLDGDFNYPIYQTVNAGDGNALQNAITTDGKGGSRHPQWFASQPRVVYIPPGTYTISKTLRFNTDTILMGDPTNPPIIKAAAGFSGDQTLISAQDPSTNEKGELSFAVAIKNVVLDTTAIPGGNSFTALWWGVAQAAHLQNVRITMSSSSGGNGHTGIRMGRGSTLGLADVRVERGQNGIWIDGHQQASFHNIYFFQNTIGMLISSGNTFSIFSSTFDTCGTAFPTLAGSPWIALIDAKSINSGVTFTTNQFPSFMIENLTKDNGTPVVVVRGSTLVGASSHVNTYSYGNTVGRNPTYGDVTSSNTRPSALAPGGRYPYVAPPTYGDLPISSFLNVKDPAQNGNRQVKGDNTINEADTLNAILELAASQNKVAYFPFGKYRVDSTLFIPKGSRIVGEAWATITGNGNFFKNENSPQPVVSVGRAGDVGIAQLQDLRVTTNDVLPGAILVQFNMAGNNPGDVALWNSLVTVGGTRGAQALANACTNNSNECKGAFIGIHVAKGSSPYIQNVWELGLRDHIAENFSGGTSHRRERWNFGPIRRNATCLYPIGSGHWWLYQLNLHNAANVVVSLLQAETNYHQGANTQQIPPAPWVANVGTWGDPDFSWCNGGDKRCRMGPANFINGGSNIYTYASAAWAFFSGPGQGCAQFECQQTIHWIASTPSNLQAFGLCSKDSVNTLRLGDGTFINTQNGYTGGWTPGGGDVARYTT.

The N-terminal stretch at methionine 1–serine 16 is a signal peptide. The propeptide occupies alanine 17–arginine 33.

It belongs to the glycosyl hydrolase 55 family. In terms of processing, does not seem to be glycosylated.

The protein localises to the secreted. It catalyses the reaction Hydrolysis of (1-&gt;3)-beta-D-glucosidic linkages in (1-&gt;3)-beta-D-glucans.. With respect to regulation, inhibited by glucose. Involved in mycoparasitism, hydrolyzes yeast and fungal cell walls. Classified as a small-oligosaccharide-producing type based its the end products: glucose, laminaribiose or laminaritetraose. This Trichoderma harzianum (Hypocrea lixii) protein is Glucan endo-1,3-beta-glucosidase BGN13.1 (bgn13.1).